Here is a 1200-residue protein sequence, read N- to C-terminus: Chromosome partition protein Smc (1200 aa).

Residue 33 to 40 participates in ATP binding; the sequence is PNGSGKSN. The interval 90 to 109 is disordered; that stretch reads GENLSEPGANHNGNGNGAKI. Residues 202 to 528 are a coiled coil; it reads EVQDREERCQ…AASQAQQEVQ (327 aa). Positions 542 to 656 constitute an SMC hinge domain; sequence PGVCGLVAQL…VFDTLVNARN (115 aa). Positions 692 to 1046 form a coiled coil; it reads TMVSEDTAEV…ERTELLLRIE (355 aa).

The protein belongs to the SMC family. As to quaternary structure, homodimer.

It is found in the cytoplasm. In terms of biological role, required for chromosome condensation and partitioning. The protein is Chromosome partition protein Smc of Synechocystis sp. (strain ATCC 27184 / PCC 6803 / Kazusa).